The following is a 353-amino-acid chain: Histidinol-phosphate aminotransferase (353 aa).

The residue at position 211 (Lys211) is an N6-(pyridoxal phosphate)lysine.

The protein belongs to the class-II pyridoxal-phosphate-dependent aminotransferase family. Histidinol-phosphate aminotransferase subfamily. Homodimer. The cofactor is pyridoxal 5'-phosphate.

It catalyses the reaction L-histidinol phosphate + 2-oxoglutarate = 3-(imidazol-4-yl)-2-oxopropyl phosphate + L-glutamate. The protein operates within amino-acid biosynthesis; L-histidine biosynthesis; L-histidine from 5-phospho-alpha-D-ribose 1-diphosphate: step 7/9. This Marinomonas sp. (strain MWYL1) protein is Histidinol-phosphate aminotransferase.